The primary structure comprises 158 residues: Ribosome maturation factor RimP (158 aa).

Belongs to the RimP family.

Its subcellular location is the cytoplasm. Its function is as follows. Required for maturation of 30S ribosomal subunits. This Pediococcus pentosaceus (strain ATCC 25745 / CCUG 21536 / LMG 10740 / 183-1w) protein is Ribosome maturation factor RimP.